A 250-amino-acid chain; its full sequence is Hydroxyethylthiazole kinase (250 aa).

Met-39 is a binding site for substrate. The ATP site is built by Arg-114 and Thr-159. Substrate is bound at residue Gly-186.

This sequence belongs to the Thz kinase family. Requires Mg(2+) as cofactor.

It carries out the reaction 5-(2-hydroxyethyl)-4-methylthiazole + ATP = 4-methyl-5-(2-phosphooxyethyl)-thiazole + ADP + H(+). It participates in cofactor biosynthesis; thiamine diphosphate biosynthesis; 4-methyl-5-(2-phosphoethyl)-thiazole from 5-(2-hydroxyethyl)-4-methylthiazole: step 1/1. Functionally, catalyzes the phosphorylation of the hydroxyl group of 4-methyl-5-beta-hydroxyethylthiazole (THZ). This Lactococcus lactis subsp. lactis (strain IL1403) (Streptococcus lactis) protein is Hydroxyethylthiazole kinase.